The chain runs to 831 residues: Multiphosphoryl transfer protein (831 aa).

In terms of domain architecture, HPr spans 1–90; sequence MLTIQFLCPL…EYILVRFIDS (90 aa). Catalysis depends on H15, which acts as the Pros-phosphohistidine intermediate; for HPr activity. H15 carries the post-translational modification Phosphohistidine; by EI. Residues 119-650 are PTS EI; sequence GNVLASGVGV…AVKSQLRQLD (532 aa). H298 functions as the Tele-phosphohistidine intermediate; for PTS EI activity in the catalytic mechanism. H298 bears the Phosphohistidine; by autocatalysis mark. Residues R405 and R441 each coordinate phosphoenolpyruvate. Positions 540 and 564 each coordinate Mg(2+). Phosphoenolpyruvate-binding positions include 563 to 564 and R574; that span reads ND. C611 acts as the Proton donor; for EI activity in catalysis. Positions 685–828 constitute a PTS EIIA type-2 domain; the sequence is PLLALENIFV…QSILTLLETE (144 aa). H747 acts as the Tele-phosphohistidine intermediate; for PTS EIIA activity in catalysis. H747 carries the post-translational modification Phosphohistidine; by HPr.

This sequence belongs to the PEP-utilizing enzyme family. Requires Mg(2+) as cofactor.

The protein resides in the cytoplasm. It catalyses the reaction L-histidyl-[protein] + phosphoenolpyruvate = N(pros)-phospho-L-histidyl-[protein] + pyruvate. It carries out the reaction D-fructose(out) + N(pros)-phospho-L-histidyl-[protein] = D-fructose 1-phosphate(in) + L-histidyl-[protein]. In terms of biological role, multifunctional protein that includes general (non sugar-specific) and sugar-specific components of the phosphoenolpyruvate-dependent sugar phosphotransferase system (sugar PTS). This major carbohydrate active transport system catalyzes the phosphorylation of incoming sugar substrates concomitantly with their translocation across the cell membrane. The enzyme II FryABC PTS system is involved in fructose transport. In Shigella flexneri, this protein is Multiphosphoryl transfer protein (fryA).